The primary structure comprises 502 residues: Polyadenylate-binding protein, cytoplasmic and nuclear (502 aa).

RRM domains lie at 14–90 (LTIY…KKDE), 96–176 (GNIF…LYNP), 191–275 (TNCF…KGQR), and 299–376 (KNLY…YFKN).

Belongs to the polyadenylate-binding protein type-1 family.

The protein resides in the cytoplasm. Its subcellular location is the nucleus. In terms of biological role, binds the poly(A) tail of mRNA. Appears to be an important mediator of the multiple roles of the poly(A) tail in mRNA biogenesis, stability and translation. The chain is Polyadenylate-binding protein, cytoplasmic and nuclear (PAB1) from Encephalitozoon cuniculi (strain GB-M1) (Microsporidian parasite).